Here is a 211-residue protein sequence, read N- to C-terminus: Prolactin (211 aa).

Residues 1 to 24 (MTHRRTKLFMMAAVVSYVMTSCGA) form the signal peptide. Cystine bridges form between Cys70-Cys184 and Cys201-Cys211.

The protein belongs to the somatotropin/prolactin family.

The protein resides in the secreted. The sequence is that of Prolactin (prl) from Paralichthys olivaceus (Bastard halibut).